Reading from the N-terminus, the 65-residue chain is Large ribosomal subunit protein bL35 (65 aa).

This sequence belongs to the bacterial ribosomal protein bL35 family.

The polypeptide is Large ribosomal subunit protein bL35 (Erwinia tasmaniensis (strain DSM 17950 / CFBP 7177 / CIP 109463 / NCPPB 4357 / Et1/99)).